Here is a 243-residue protein sequence, read N- to C-terminus: Purine nucleoside phosphorylase YfiH (243 aa).

Positions 71, 107, and 124 each coordinate Zn(2+).

This sequence belongs to the purine nucleoside phosphorylase YfiH/LACC1 family. As to quaternary structure, homodimer. It depends on Cu(2+) as a cofactor. Requires Zn(2+) as cofactor.

The catalysed reaction is adenosine + phosphate = alpha-D-ribose 1-phosphate + adenine. It carries out the reaction S-methyl-5'-thioadenosine + phosphate = 5-(methylsulfanyl)-alpha-D-ribose 1-phosphate + adenine. The enzyme catalyses inosine + phosphate = alpha-D-ribose 1-phosphate + hypoxanthine. It catalyses the reaction adenosine + H2O + H(+) = inosine + NH4(+). Purine nucleoside enzyme that catalyzes the phosphorolysis of adenosine and inosine nucleosides, yielding D-ribose 1-phosphate and the respective free bases, adenine and hypoxanthine. Also catalyzes the phosphorolysis of S-methyl-5'-thioadenosine into adenine and S-methyl-5-thio-alpha-D-ribose 1-phosphate. Also has adenosine deaminase activity. May also act as a polyphenol oxidase: able to oxidize syringaldazine and 2,2'-azino-bis(3-ethylbenzthiazoline-6-sulfonic acid) (ABTS) in vitro. The polypeptide is Purine nucleoside phosphorylase YfiH (Escherichia coli (strain K12)).